The primary structure comprises 274 residues: Putative pyruvate, phosphate dikinase regulatory protein 1 (274 aa).

149 to 156 contacts ADP; that stretch reads GISRTSKT.

It belongs to the pyruvate, phosphate/water dikinase regulatory protein family. PDRP subfamily.

It catalyses the reaction N(tele)-phospho-L-histidyl/L-threonyl-[pyruvate, phosphate dikinase] + ADP = N(tele)-phospho-L-histidyl/O-phospho-L-threonyl-[pyruvate, phosphate dikinase] + AMP + H(+). The enzyme catalyses N(tele)-phospho-L-histidyl/O-phospho-L-threonyl-[pyruvate, phosphate dikinase] + phosphate + H(+) = N(tele)-phospho-L-histidyl/L-threonyl-[pyruvate, phosphate dikinase] + diphosphate. Its function is as follows. Bifunctional serine/threonine kinase and phosphorylase involved in the regulation of the pyruvate, phosphate dikinase (PPDK) by catalyzing its phosphorylation/dephosphorylation. This chain is Putative pyruvate, phosphate dikinase regulatory protein 1, found in Listeria welshimeri serovar 6b (strain ATCC 35897 / DSM 20650 / CCUG 15529 / CIP 8149 / NCTC 11857 / SLCC 5334 / V8).